The primary structure comprises 206 residues: Proteasome subunit beta type-2 (206 aa).

This sequence belongs to the peptidase T1B family. The 26S proteasome consists of a 20S proteasome core and two 19S regulatory subunits. The 20S proteasome core is composed of 28 subunits that are arranged in four stacked rings, resulting in a barrel-shaped structure. The two end rings are each formed by seven alpha subunits, and the two central rings are each formed by seven beta subunits. The catalytic chamber with the active sites is on the inside of the barrel.

The protein resides in the cytoplasm. The protein localises to the nucleus. Non-catalytic component of the proteasome, a multicatalytic proteinase complex which is characterized by its ability to cleave peptides with Arg, Phe, Tyr, Leu, and Glu adjacent to the leaving group at neutral or slightly basic pH. The proteasome has an ATP-dependent proteolytic activity. In Trypanosoma brucei brucei, this protein is Proteasome subunit beta type-2 (PSB4).